A 168-amino-acid chain; its full sequence is MIEMEPDTHIISALVEHKPGVLQRVAGLFTRRGFNIENITVGESETPGIARMTIIARGDDRVLEQITKQLNKLIDVIKVRDLEPAATVKRELCMVKVHAPSESERSEIIQYTNIFRGRIVDVSPDALTVEVTGDSEKIDAFLELLRNFGIKELARTGPTAMSRGSRTM.

Positions 10–84 constitute an ACT domain; the sequence is IISALVEHKP…DVIKVRDLEP (75 aa).

Belongs to the acetolactate synthase small subunit family. Dimer of large and small chains.

It carries out the reaction 2 pyruvate + H(+) = (2S)-2-acetolactate + CO2. It functions in the pathway amino-acid biosynthesis; L-isoleucine biosynthesis; L-isoleucine from 2-oxobutanoate: step 1/4. The protein operates within amino-acid biosynthesis; L-valine biosynthesis; L-valine from pyruvate: step 1/4. The polypeptide is Probable acetolactate synthase small subunit (ilvH) (Methanothermobacter thermautotrophicus (strain ATCC 29096 / DSM 1053 / JCM 10044 / NBRC 100330 / Delta H) (Methanobacterium thermoautotrophicum)).